A 242-amino-acid polypeptide reads, in one-letter code: Platinum sensitivity protein 3 (242 aa).

In terms of assembly, component of the SHU complex composed of at least CSM2, PSY3, SHU1 and SHU2.

It is found in the nucleus. Its function is as follows. Required for resistance to the DNA-damaging agents methyl methanesulfonate (MMS), cisplatin and oxaliplatin, but not to mitomycin C. Plays a role in protection against mutation accumulation. May be a component of the recombination-repair pathway. This chain is Platinum sensitivity protein 3 (PSY3), found in Saccharomyces cerevisiae (strain ATCC 204508 / S288c) (Baker's yeast).